We begin with the raw amino-acid sequence, 112 residues long: MLHNLLLNPNQSNKTHPNTIDIYTDAIKTMFETNKNQTVSKKNDQNTYDLEDENKLIDLENSYKKSLILLNILQKKIEQNILEKYNLEKNNNNITDNSDNEIIQNTLIKKNS.

To Buchnera BUsg564.

This is an uncharacterized protein from Buchnera aphidicola subsp. Acyrthosiphon pisum (strain APS) (Acyrthosiphon pisum symbiotic bacterium).